The following is a 285-amino-acid chain: Phycobilisome 31.6 kDa linker polypeptide, phycocyanin-associated, rod (285 aa).

The PBS-linker domain maps to 1–180 (MPITTAASRL…LYRGYATSDR (180 aa)).

The protein belongs to the phycobilisome linker protein family.

It localises to the cellular thylakoid membrane. In terms of biological role, rod linker protein, associated with phycocyanin. Linker polypeptides determine the state of aggregation and the location of the disk-shaped phycobiliprotein units within the phycobilisome and modulate their spectroscopic properties in order to mediate a directed and optimal energy transfer. This is Phycobilisome 31.6 kDa linker polypeptide, phycocyanin-associated, rod (cpcI3) from Microchaete diplosiphon (Fremyella diplosiphon).